We begin with the raw amino-acid sequence, 206 residues long: Transcription factor MYB57 (206 aa).

The segment covering 1–11 has biased composition (basic residues); that stretch reads METTMKKKGRV. Residues 1–20 form a disordered region; it reads METTMKKKGRVKATITSQKE. HTH myb-type domains follow at residues 22 to 74 and 75 to 129; these read EGTV…LNYL and RPDV…QRHM. 2 consecutive DNA-binding regions (H-T-H motif) follow at residues 50–74 and 102–125; these read WNSV…LNYL and WSKI…RTKI. Residues 138 to 162 form a disordered region; the sequence is NHQHHCSGNSQSSGMTTQGSSGKAI. Positions 144-159 are enriched in low complexity; it reads SGNSQSSGMTTQGSSG.

As to expression, expressed specifically in flowers.

The protein localises to the nucleus. Functionally, transcription factor acting redundantly with MYB21 and MYB24 to control stamen filament elongation in the late developed flowers. Repressed at the transcript levels by DELLA proteins. The sequence is that of Transcription factor MYB57 (MYB57) from Arabidopsis thaliana (Mouse-ear cress).